We begin with the raw amino-acid sequence, 274 residues long: Diaminopimelate epimerase (274 aa).

3 residues coordinate substrate: Asn-11, Gln-44, and Asn-64. Residue Cys-73 is the Proton donor of the active site. Substrate contacts are provided by residues 74 to 75, Asn-157, Asn-190, and 208 to 209; these read GN and ER. The active-site Proton acceptor is Cys-217. 218-219 contributes to the substrate binding site; that stretch reads GS.

It belongs to the diaminopimelate epimerase family. As to quaternary structure, homodimer.

The protein localises to the cytoplasm. The enzyme catalyses (2S,6S)-2,6-diaminopimelate = meso-2,6-diaminopimelate. It participates in amino-acid biosynthesis; L-lysine biosynthesis via DAP pathway; DL-2,6-diaminopimelate from LL-2,6-diaminopimelate: step 1/1. Functionally, catalyzes the stereoinversion of LL-2,6-diaminopimelate (L,L-DAP) to meso-diaminopimelate (meso-DAP), a precursor of L-lysine and an essential component of the bacterial peptidoglycan. The polypeptide is Diaminopimelate epimerase (Histophilus somni (strain 129Pt) (Haemophilus somnus)).